A 130-amino-acid chain; its full sequence is Protein ApaG (130 aa).

Residues 3–127 (STITRDIQIT…FSLDSPFSRQ (125 aa)) enclose the ApaG domain.

The protein is Protein ApaG of Beijerinckia indica subsp. indica (strain ATCC 9039 / DSM 1715 / NCIMB 8712).